Reading from the N-terminus, the 319-residue chain is F-box only protein 8 (319 aa).

Positions 68–111 (FINLEMLPPELSFTILSYLNATDLCLASCVWQDLANDELLWQGL) constitute an F-box domain. Residues 146 to 276 (FNANPEEGVS…LILLSIDLTS (131 aa)) form the SEC7 domain.

In terms of tissue distribution, high expression in brain, heart, kidney, liver, lung, skeletal muscle, testis, and day-7 embryos.

In terms of biological role, may promote guanine-nucleotide exchange on an ARF. Promotes the activation of ARF through replacement of GDP with GTP (Potential). The polypeptide is F-box only protein 8 (Fbxo8) (Mus musculus (Mouse)).